We begin with the raw amino-acid sequence, 341 residues long: D-aspartate oxidase (341 aa).

Residues Asp36, Arg37, Thr43, Ser44, Met50, Gly307, Ile311, and Ser312 each coordinate FAD. The short motif at 339–341 (SKL) is the Microbody targeting signal element.

It belongs to the DAMOX/DASOX family. As to quaternary structure, tetramer. Interacts with PEX5; the interaction is direct and required for localization of DDO to the peroxisome. FAD serves as cofactor. In terms of tissue distribution, expressed in liver and kidney (at protein level). In the brain, expressed in the frontal, temporal, and occipital lobes of the cortex, hippocampus, striatum, diencephalon, brainstem, cerebellum, spinal cord, plexus choroiderus and ependyma (at protein level). Also expressed in the lung, muscle, heart, spleen, small intestine and testis (at protein level).

It is found in the peroxisome matrix. The protein resides in the cytoplasm. Its subcellular location is the cytosol. It carries out the reaction D-aspartate + O2 + H2O = oxaloacetate + H2O2 + NH4(+). It catalyses the reaction D-glutamate + O2 + H2O = H2O2 + 2-oxoglutarate + NH4(+). Its activity is regulated as follows. Inhibited by aminooxyacetic acid, malonate, meso-tartrate and potassium bromide. In terms of biological role, selectively catalyzes the oxidative deamination of acidic amino acids. Suppresses the level of D-aspartate in the brain, an amino acid that can act as an agonist for glutamate receptors. Protects the organism from the toxicity of D-amino acids. May also function in the intestine. The protein is D-aspartate oxidase of Rattus norvegicus (Rat).